Reading from the N-terminus, the 49-residue chain is Large ribosomal subunit protein bL33B (49 aa).

Belongs to the bacterial ribosomal protein bL33 family.

The chain is Large ribosomal subunit protein bL33B (rpmG2) from Listeria innocua serovar 6a (strain ATCC BAA-680 / CLIP 11262).